Reading from the N-terminus, the 108-residue chain is Envelope small membrane protein (108 aa).

Over 1 to 10 (MNLLNKSLEE) the chain is Virion surface. The helical transmembrane segment at 11 to 31 (NGSFLTALYIIVGFLALYLLG) threads the bilayer. At 32-108 (RALQAFVQAA…QDAQRDKLYS (77 aa)) the chain is on the intravirion side. Positions 88–108 (NGWNNKNPANFQDAQRDKLYS) are disordered. Over residues 89–100 (GWNNKNPANFQD) the composition is skewed to polar residues.

It belongs to the gammacoronaviruses E protein family. In terms of assembly, homooligomer. Interacts with the M membrane protein in the budding compartment of the host cell, which is located between endoplasmic reticulum and the Golgi complex. The cytoplasmic tails of both proteins are important for this function. Interacts with Nucleoprotein.

It localises to the host Golgi apparatus membrane. Functionally, plays a central role in virus morphogenesis and assembly. Acts as a viroporin and self-assembles in host membranes forming pentameric protein-lipid pores that allow ion transport. Also plays a role in the induction of apoptosis. In Gallus gallus (Chicken), this protein is Envelope small membrane protein.